Reading from the N-terminus, the 318-residue chain is Protein W (318 aa).

2 disordered regions span residues 1 to 23 (MDQD…GGRE) and 38 to 318 (SEPT…KKGA). The segment covering 7 to 20 (ILKEDSEVEREAPG) has biased composition (basic and acidic residues). Over residues 50–59 (LHNTINTPQG) the composition is skewed to polar residues. At Ser-68 the chain carries Phosphoserine; by host. Positions 83-101 (RSGEESRVSGRTSKPEAEA) are enriched in basic and acidic residues. Phosphoserine; by host is present on Ser-125. Residues 150–168 (GIEDENREMAAHPDKRGED) show a composition bias toward basic and acidic residues. A compositionally biased stretch (polar residues) spans 191–206 (ASNNGRSMEPGSSHSA). Phosphoserine; by host is present on residues Ser-192, Ser-249, Ser-257, and Ser-260.

In Sendai virus (strain Z) (SeV), this protein is Protein W (P/V/C).